Consider the following 557-residue polypeptide: Urocanate hydratase (557 aa).

The segment at 1 to 20 (MSNPRHNEREVRSPRGDELN) is disordered. Residues 52–53 (GG), glutamine 130, 176–178 (GMG), glutamate 196, arginine 201, 242–243 (NA), 263–267 (QTSAH), 273–274 (YL), and tyrosine 322 contribute to the NAD(+) site. The active site involves cysteine 410. NAD(+) is bound at residue glycine 492.

This sequence belongs to the urocanase family. Requires NAD(+) as cofactor.

The protein resides in the cytoplasm. It carries out the reaction 4-imidazolone-5-propanoate = trans-urocanate + H2O. It functions in the pathway amino-acid degradation; L-histidine degradation into L-glutamate; N-formimidoyl-L-glutamate from L-histidine: step 2/3. Functionally, catalyzes the conversion of urocanate to 4-imidazolone-5-propionate. The polypeptide is Urocanate hydratase (Brucella suis (strain ATCC 23445 / NCTC 10510)).